The following is a 184-amino-acid chain: Ribosome-recycling factor (184 aa).

Belongs to the RRF family.

The protein resides in the cytoplasm. In terms of biological role, responsible for the release of ribosomes from messenger RNA at the termination of protein biosynthesis. May increase the efficiency of translation by recycling ribosomes from one round of translation to another. This chain is Ribosome-recycling factor, found in Leptospira interrogans serogroup Icterohaemorrhagiae serovar copenhageni (strain Fiocruz L1-130).